A 350-amino-acid chain; its full sequence is uncharacterized protein (350 aa).

The region spanning 171–334 is the OBG-type G domain; that stretch reads PTVVIAGYPN…LKERLKKIAI (164 aa). Residues 177 to 184, 219 to 223, and 286 to 289 each bind GTP; these read GYPNVGKS, DTPGL, and NKID.

Belongs to the TRAFAC class OBG-HflX-like GTPase superfamily. OBG GTPase family. NOG subfamily.

This is an uncharacterized protein from Methanocaldococcus jannaschii (strain ATCC 43067 / DSM 2661 / JAL-1 / JCM 10045 / NBRC 100440) (Methanococcus jannaschii).